The chain runs to 303 residues: Zinc transporter ZIP9 (303 aa).

A helical membrane pass occupies residues 7–27 (ISLLSLAMLVGCYVSGIIPLA). N-linked (GlcNAc...) asparagine glycosylation is present at Asn29. Transmembrane regions (helical) follow at residues 35–55 (LKLV…AVIV), 102–122 (AYIG…DQIG), 142–162 (ITTT…LGAA), 172–192 (LIVF…LVSF), and 206–226 (HLLV…LGLS). Asn237 carries N-linked (GlcNAc...) asparagine glycosylation. The next 2 helical transmembrane spans lie at 240–260 (GVAM…HVLP) and 282–302 (LEVC…IGHQ).

The protein belongs to the ZIP transporter (TC 2.A.5) family.

It is found in the golgi apparatus. The protein localises to the trans-Golgi network membrane. The protein resides in the cell membrane. Its subcellular location is the cytoplasm. It localises to the perinuclear region. It is found in the mitochondrion. The protein localises to the nucleus. The enzyme catalyses Zn(2+)(in) = Zn(2+)(out). Its function is as follows. Transports zinc ions across cell and organelle membranes into the cytoplasm and regulates intracellular zinc homeostasis. Participates in the zinc ions efflux out of the secretory compartments. Also functions as a membrane androgen receptor that mediates, through a G protein, the non-classical androgen signaling pathway, characterized by the activation of MAPK3/MAPK1 (Erk1/2) and transcription factors CREB1 or ATF1. Moreover, has dual functions as a membrane-bound androgen receptor and as an androgen-dependent zinc transporter both of which are mediated through an inhibitory G protein (Gi) that mediates both MAP kinase and zinc signaling leading to the androgen-dependent apoptotic process. The sequence is that of Zinc transporter ZIP9 from Xenopus tropicalis (Western clawed frog).